Here is a 427-residue protein sequence, read N- to C-terminus: Serine--tRNA ligase (427 aa).

Residue 233–235 (TAE) coordinates L-serine. 264–266 (RSE) serves as a coordination point for ATP. E287 contributes to the L-serine binding site. 351–354 (EISS) contacts ATP. Position 387 (S387) interacts with L-serine.

The protein belongs to the class-II aminoacyl-tRNA synthetase family. Type-1 seryl-tRNA synthetase subfamily. In terms of assembly, homodimer. The tRNA molecule binds across the dimer.

It localises to the cytoplasm. It carries out the reaction tRNA(Ser) + L-serine + ATP = L-seryl-tRNA(Ser) + AMP + diphosphate + H(+). The catalysed reaction is tRNA(Sec) + L-serine + ATP = L-seryl-tRNA(Sec) + AMP + diphosphate + H(+). It participates in aminoacyl-tRNA biosynthesis; selenocysteinyl-tRNA(Sec) biosynthesis; L-seryl-tRNA(Sec) from L-serine and tRNA(Sec): step 1/1. Its function is as follows. Catalyzes the attachment of serine to tRNA(Ser). Is also able to aminoacylate tRNA(Sec) with serine, to form the misacylated tRNA L-seryl-tRNA(Sec), which will be further converted into selenocysteinyl-tRNA(Sec). The polypeptide is Serine--tRNA ligase (Buchnera aphidicola subsp. Schizaphis graminum (strain Sg)).